Reading from the N-terminus, the 291-residue chain is tRNA pseudouridine synthase B (291 aa).

Aspartate 41 acts as the Nucleophile in catalysis.

This sequence belongs to the pseudouridine synthase TruB family. Type 1 subfamily.

It catalyses the reaction uridine(55) in tRNA = pseudouridine(55) in tRNA. Functionally, responsible for synthesis of pseudouridine from uracil-55 in the psi GC loop of transfer RNAs. This Parasynechococcus marenigrum (strain WH8102) protein is tRNA pseudouridine synthase B.